The following is a 289-amino-acid chain: Type III pantothenate kinase (289 aa).

Position 9 to 16 (9 to 16) interacts with ATP; the sequence is DAGNSRVK. Residues Y106 and 113–116 contribute to the substrate site; that span reads GSDR. D115 serves as the catalytic Proton acceptor. T139 contributes to the ATP binding site. Residue T209 coordinates substrate.

The protein belongs to the type III pantothenate kinase family. As to quaternary structure, homodimer. Requires NH4(+) as cofactor. K(+) serves as cofactor.

It is found in the cytoplasm. It carries out the reaction (R)-pantothenate + ATP = (R)-4'-phosphopantothenate + ADP + H(+). Its pathway is cofactor biosynthesis; coenzyme A biosynthesis; CoA from (R)-pantothenate: step 1/5. Catalyzes the phosphorylation of pantothenate (Pan), the first step in CoA biosynthesis. This chain is Type III pantothenate kinase, found in Paraburkholderia phymatum (strain DSM 17167 / CIP 108236 / LMG 21445 / STM815) (Burkholderia phymatum).